A 458-amino-acid chain; its full sequence is Retinoic acid receptor alpha (458 aa).

The tract at residues 1–87 is modulating; that stretch reads MSSKDNTCPP…PPPLPRIYKP (87 aa). The disordered stretch occupies residues 39-78; it reads GGLPGVQHQPPLSGYSTPSPATIETQSTSSEEIVPSPPTP. Residues 52-69 show a composition bias toward polar residues; the sequence is GYSTPSPATIETQSTSSE. 2 NR C4-type zinc fingers span residues 88–108 and 124–148; these read CFVC…CEGC and CHRD…LQKC. A DNA-binding region (nuclear receptor) is located at residues 88–153; that stretch reads CFVCQDKSSG…RLQKCFEVGM (66 aa). A hinge region spans residues 154-182; that stretch reads SKESVRNDRNKKKKESPKPEAIESYILSP. Residues 183–417 enclose the NR LBD domain; it reads ETQDLIEKVQ…LIQEMLENSE (235 aa). The 9aaTAD signature appears at 407 to 415; that stretch reads PLIQEMLEN. Residues 419–458 are disordered; that stretch reads LDTLGGGASSDAPVTPVAPGSCSPSLSPSSTHSSPSTHSP. Positions 439 to 458 are enriched in low complexity; the sequence is SCSPSLSPSSTHSSPSTHSP.

It belongs to the nuclear hormone receptor family. NR1 subfamily. In terms of assembly, heterodimer; with an rxr molecule. Binds DNA preferentially as a rar/rxr heterodimer.

Its subcellular location is the nucleus. In terms of biological role, receptor for retinoic acid. Retinoic acid receptors bind as heterodimers to their target response elements in response to their ligands, all-trans or 9-cis retinoic acid, and regulate gene expression in various biological processes. The rar/rxr heterodimers bind to the retinoic acid response elements (RARE) composed of tandem 5'-AGGTCA-3' sites known as DR1-DR5. Required for primary neurogenesis and for anteroposterior neural patterning. This chain is Retinoic acid receptor alpha (rara), found in Xenopus laevis (African clawed frog).